A 708-amino-acid polypeptide reads, in one-letter code: E3 ubiquitin-protein ligase Praja-2 (708 aa).

Residues 1–10 (MSQYTEKEPA) show a composition bias toward basic and acidic residues. 2 disordered regions span residues 1 to 30 (MSQYTEKEPAAMDQESGKAVWPKPAGGYQT) and 53 to 90 (ERSLGRAGDDYEVLELDDVPKENSSGSSPLDQVDSSLP). At Ser2 the chain carries N-acetylserine. Polar residues predominate over residues 74–90 (ENSSGSSPLDQVDSSLP). A Phosphoserine modification is found at Ser196. Disordered regions lie at residues 244 to 342 (GDTE…KQRS), 385 to 411 (TQRETENNQVTPESGATAGRQEVDNPF), and 425 to 495 (DEDS…QTSL). The residue at position 246 (Thr246) is a Phosphothreonine. The segment covering 249–276 (VHQNSQEIQRSSQDEMVSTKQQNNTSQE) has biased composition (polar residues). 3 positions are modified to phosphoserine: Ser253, Ser309, and Ser323. Polar residues predominate over residues 322 to 332 (ISSSQVDQETG). Over residues 333-342 (FNRHEAKQRS) the composition is skewed to basic and acidic residues. The residue at position 342 (Ser342) is a Phosphoserine; by PKA. A Phosphothreonine; by PKA modification is found at Thr389. Phosphoserine is present on Ser432. Over residues 467–483 (NEPELQSDSSGPEEENQ) the composition is skewed to acidic residues. Positions 484–493 (ELSLQEGEQT) are enriched in polar residues. Residues 531–708 (DGNNNLEDDS…PSNDSIAEAP (178 aa)) are interaction with PRKAR1A, PRKAR2A and PRKAR2B. The tract at residues 550-570 (WSLFDGFADGLGVAEAISYVD) is mediates interaction with TBC1D31. The RING-type; atypical zinc finger occupies 634 to 675 (CPICCSEYIKDDIATELPCHHFFHKPCVSIWLQKSGTCPVCR). The segment at 685–708 (ASAAPSSEPDPDAPPSNDSIAEAP) is disordered. Residues 699 to 708 (PSNDSIAEAP) show a composition bias toward low complexity.

In terms of assembly, binds ubiquitin-conjugating enzymes (E2s). In vitro, interacts with the ubiquitin-conjugating enzyme, UBE2D2. The phosphorylated form interacts with PRKAR1A, PRKAR2A and PRKAR2B. Binds the catalytic subunits of cAMP-dependent protein kinase. Interacts with MFHAS1. Interacts with TBC1D31; the interaction is direct and recruits PJA2 to centrosomes.

The protein localises to the cytoplasm. It is found in the cell membrane. The protein resides in the endoplasmic reticulum membrane. It localises to the golgi apparatus membrane. Its subcellular location is the synapse. The protein localises to the postsynaptic density. It is found in the cytoskeleton. The protein resides in the microtubule organizing center. It localises to the centrosome. It catalyses the reaction S-ubiquitinyl-[E2 ubiquitin-conjugating enzyme]-L-cysteine + [acceptor protein]-L-lysine = [E2 ubiquitin-conjugating enzyme]-L-cysteine + N(6)-ubiquitinyl-[acceptor protein]-L-lysine.. Its pathway is protein modification; protein ubiquitination. Functionally, has E2-dependent E3 ubiquitin-protein ligase activity. Responsible for ubiquitination of cAMP-dependent protein kinase type I and type II-alpha/beta regulatory subunits and for targeting them for proteasomal degradation. Essential for PKA-mediated long-term memory processes. Through the ubiquitination of MFHAS1, positively regulates the TLR2 signaling pathway that leads to the activation of the downstream p38 and JNK MAP kinases and promotes the polarization of macrophages toward the pro-inflammatory M1 phenotype. Plays a role in ciliogenesis by ubiquitinating OFD1. The chain is E3 ubiquitin-protein ligase Praja-2 (PJA2) from Pongo abelii (Sumatran orangutan).